The primary structure comprises 329 residues: Bifunctional nuclease 2 (329 aa).

Positions 121–256 (CVHNNPQGGN…YLAYSDGMRV (136 aa)) constitute a BFN domain. Residues 287-322 (DTKEFDLVRNMMQAVDEERYDEAAEWRDKLGKFQAK) form the UVR domain.

This sequence belongs to the bifunctional nuclease family.

Its subcellular location is the nucleus. Its function is as follows. Bifunctional nuclease with both RNase and DNase activities. Involved in basal defense response. Participates in abscisic acid-derived callose deposition following infection by a necrotrophic pathogen. The polypeptide is Bifunctional nuclease 2 (BBD2) (Arabidopsis thaliana (Mouse-ear cress)).